A 517-amino-acid chain; its full sequence is Crotonobetaine/carnitine--CoA ligase (517 aa).

Belongs to the ATP-dependent AMP-binding enzyme family.

The catalysed reaction is 4-(trimethylamino)butanoate + ATP + CoA = 4-(trimethylamino)butanoyl-CoA + AMP + diphosphate. It catalyses the reaction crotonobetaine + ATP + CoA = crotonobetainyl-CoA + AMP + diphosphate. It carries out the reaction (R)-carnitine + ATP + CoA = (R)-carnitinyl-CoA + AMP + diphosphate. It participates in amine and polyamine metabolism; carnitine metabolism. In terms of biological role, catalyzes the transfer of CoA to carnitine, generating the initial carnitinyl-CoA needed for the CaiB reaction cycle. Also has activity toward crotonobetaine and gamma-butyrobetaine. This chain is Crotonobetaine/carnitine--CoA ligase, found in Shigella dysenteriae serotype 1 (strain Sd197).